The sequence spans 223 residues: Endonuclease V (223 aa).

Mg(2+)-binding residues include Asp-35 and Asp-103.

The protein belongs to the endonuclease V family. The cofactor is Mg(2+).

It is found in the cytoplasm. It catalyses the reaction Endonucleolytic cleavage at apurinic or apyrimidinic sites to products with a 5'-phosphate.. Functionally, DNA repair enzyme involved in the repair of deaminated bases. Selectively cleaves double-stranded DNA at the second phosphodiester bond 3' to a deoxyinosine leaving behind the intact lesion on the nicked DNA. The chain is Endonuclease V from Klebsiella pneumoniae subsp. pneumoniae (strain ATCC 700721 / MGH 78578).